A 304-amino-acid chain; its full sequence is Large ribosomal subunit protein uL18 (304 aa).

Residues 285–304 (LNALNSSAGADDDDEEEDDE) are disordered. The span at 294-304 (ADDDDEEEDDE) shows a compositional bias: acidic residues.

Belongs to the universal ribosomal protein uL18 family. As to quaternary structure, component of the large ribosomal subunit (LSU).

The protein localises to the cytoplasm. The protein resides in the nucleus. Functionally, component of the ribosome, a large ribonucleoprotein complex responsible for the synthesis of proteins in the cell. The small ribosomal subunit (SSU) binds messenger RNAs (mRNAs) and translates the encoded message by selecting cognate aminoacyl-transfer RNA (tRNA) molecules. The large subunit (LSU) contains the ribosomal catalytic site termed the peptidyl transferase center (PTC), which catalyzes the formation of peptide bonds, thereby polymerizing the amino acids delivered by tRNAs into a polypeptide chain. The nascent polypeptides leave the ribosome through a tunnel in the LSU and interact with protein factors that function in enzymatic processing, targeting, and the membrane insertion of nascent chains at the exit of the ribosomal tunnel. In Oryza sativa subsp. indica (Rice), this protein is Large ribosomal subunit protein uL18 (RPL5A).